A 136-amino-acid polypeptide reads, in one-letter code: Aspartate 1-decarboxylase (136 aa).

The Schiff-base intermediate with substrate; via pyruvic acid role is filled by Ser-25. The residue at position 25 (Ser-25) is a Pyruvic acid (Ser). Thr-57 lines the substrate pocket. The active-site Proton donor is Tyr-58. 73–75 lines the substrate pocket; it reads GAA.

Belongs to the PanD family. In terms of assembly, heterooctamer of four alpha and four beta subunits. Pyruvate serves as cofactor. Is synthesized initially as an inactive proenzyme, which is activated by self-cleavage at a specific serine bond to produce a beta-subunit with a hydroxyl group at its C-terminus and an alpha-subunit with a pyruvoyl group at its N-terminus.

The protein resides in the cytoplasm. It catalyses the reaction L-aspartate + H(+) = beta-alanine + CO2. The protein operates within cofactor biosynthesis; (R)-pantothenate biosynthesis; beta-alanine from L-aspartate: step 1/1. Functionally, catalyzes the pyruvoyl-dependent decarboxylation of aspartate to produce beta-alanine. The chain is Aspartate 1-decarboxylase from Corynebacterium efficiens (strain DSM 44549 / YS-314 / AJ 12310 / JCM 11189 / NBRC 100395).